Consider the following 201-residue polypeptide: uncharacterized protein (201 aa).

This sequence belongs to the methyltransferase superfamily.

This is an uncharacterized protein from Bacillus subtilis (strain 168).